A 372-amino-acid chain; its full sequence is Type II methyltransferase M1.HphI (372 aa).

Residues 45-372 enclose the SAM-dependent MTase C5-type domain; the sequence is LTYIDLFSGA…EAVLKMNTNE (328 aa). Cysteine 122 is a catalytic residue.

This sequence belongs to the class I-like SAM-binding methyltransferase superfamily. C5-methyltransferase family.

The catalysed reaction is a 2'-deoxycytidine in DNA + S-adenosyl-L-methionine = a 5-methyl-2'-deoxycytidine in DNA + S-adenosyl-L-homocysteine + H(+). In terms of biological role, a methylase that recognizes the double-stranded sequence 5'-GGTGA-3' and protects the DNA from cleavage by the HphI endonuclease. Probably methylates C-2 on the bottom strand. The sequence is that of Type II methyltransferase M1.HphI (hphIAM) from Haemophilus parahaemolyticus.